The following is a 265-amino-acid chain: 5'-nucleotidase SurE (265 aa).

Residues Asp8, Asp9, Ser40, and Asn98 each contribute to the a divalent metal cation site.

Belongs to the SurE nucleotidase family. Requires a divalent metal cation as cofactor.

The protein resides in the cytoplasm. It catalyses the reaction a ribonucleoside 5'-phosphate + H2O = a ribonucleoside + phosphate. In terms of biological role, nucleotidase that shows phosphatase activity on nucleoside 5'-monophosphates. In Nostoc sp. (strain PCC 7120 / SAG 25.82 / UTEX 2576), this protein is 5'-nucleotidase SurE.